The sequence spans 361 residues: Histidinol-phosphate aminotransferase (361 aa).

Lysine 219 is modified (N6-(pyridoxal phosphate)lysine).

The protein belongs to the class-II pyridoxal-phosphate-dependent aminotransferase family. Histidinol-phosphate aminotransferase subfamily. As to quaternary structure, homodimer. It depends on pyridoxal 5'-phosphate as a cofactor.

It catalyses the reaction L-histidinol phosphate + 2-oxoglutarate = 3-(imidazol-4-yl)-2-oxopropyl phosphate + L-glutamate. It functions in the pathway amino-acid biosynthesis; L-histidine biosynthesis; L-histidine from 5-phospho-alpha-D-ribose 1-diphosphate: step 7/9. The polypeptide is Histidinol-phosphate aminotransferase (Acinetobacter baumannii (strain AB307-0294)).